A 202-amino-acid chain; its full sequence is ATP-dependent Clp protease proteolytic subunit (202 aa).

Ser-106 (nucleophile) is an active-site residue. His-131 is a catalytic residue.

Belongs to the peptidase S14 family. As to quaternary structure, fourteen ClpP subunits assemble into 2 heptameric rings which stack back to back to give a disk-like structure with a central cavity, resembling the structure of eukaryotic proteasomes.

The protein resides in the cytoplasm. It carries out the reaction Hydrolysis of proteins to small peptides in the presence of ATP and magnesium. alpha-casein is the usual test substrate. In the absence of ATP, only oligopeptides shorter than five residues are hydrolyzed (such as succinyl-Leu-Tyr-|-NHMec, and Leu-Tyr-Leu-|-Tyr-Trp, in which cleavage of the -Tyr-|-Leu- and -Tyr-|-Trp bonds also occurs).. Cleaves peptides in various proteins in a process that requires ATP hydrolysis. Has a chymotrypsin-like activity. Plays a major role in the degradation of misfolded proteins. This is ATP-dependent Clp protease proteolytic subunit from Shewanella baltica (strain OS223).